A 340-amino-acid chain; its full sequence is Beta-ketoacyl-[acyl-carrier-protein] synthase III (340 aa).

Catalysis depends on residues C119 and H260. The segment at 261 to 265 (QANYR) is ACP-binding. Residue N290 is part of the active site.

This sequence belongs to the thiolase-like superfamily. FabH family. As to quaternary structure, homodimer.

It localises to the cytoplasm. It catalyses the reaction malonyl-[ACP] + acetyl-CoA + H(+) = 3-oxobutanoyl-[ACP] + CO2 + CoA. Its pathway is lipid metabolism; fatty acid biosynthesis. Its function is as follows. Catalyzes the condensation reaction of fatty acid synthesis by the addition to an acyl acceptor of two carbons from malonyl-ACP. Catalyzes the first condensation reaction which initiates fatty acid synthesis and may therefore play a role in governing the total rate of fatty acid production. Possesses both acetoacetyl-ACP synthase and acetyl transacylase activities. Its substrate specificity determines the biosynthesis of branched-chain and/or straight-chain of fatty acids. This Sulfurovum sp. (strain NBC37-1) protein is Beta-ketoacyl-[acyl-carrier-protein] synthase III.